The following is a 470-amino-acid chain: MNPNQKIITIGSASLGILILNVILHVVSIIVTVLVLNNNGTGLNCNGTIIREYNETVRVERVIQWYNTNTIEYIERPSNEYYMNNTEPLCEAQGFAPFSKDNGIRIGSRGHVFVIREPFVSCSPSECRTFFLTQGSLLNDKHSNGTVKDRSPYRTLMSVKIGQSPNVYQARFESVAWSATACHDGKKWMTVGVTGPDNQAVAVVNYGGVPVDIINSWAGDILRTQESSCTCIKGDCYWVMTDGPANRQAKYRIFKAKDGRIIGQTDISFNGGHIEECSCYPNEGKVECVCRDNWTGTNRPILVISPDLSYTVGYLCAGIPTDTPRGEDSQFTGSCTSPLGNKGYGVKGFGFRQGTDVWAGRTISRTSRSGFEIIKIRNGWTQNSKDQIRRQVIIDNPNWSGYSGSFTLPVELTKKGCLVPCFWVEMIRGKPEETTIWTSSSSIVMCGVDHKIASWSWHDGAILPFDIDKM.

The Intravirion segment spans residues 1–14; sequence MNPNQKIITIGSAS. Positions 11–32 are involved in apical transport and lipid raft association; it reads GSASLGILILNVILHVVSIIVT. The helical transmembrane segment at 15 to 35 threads the bilayer; the sequence is LGILILNVILHVVSIIVTVLV. The hypervariable stalk region stretch occupies residues 32-86; sequence TVLVLNNNGTGLNCNGTIIREYNETVRVERVIQWYNTNTIEYIERPSNEYYMNNT. The Virion surface segment spans residues 36 to 470; it reads LNNNGTGLNC…AILPFDIDKM (435 aa). Residues Asn39, Asn46, Asn54, and Asn84 are each glycosylated (N-linked (GlcNAc...) asparagine; by host). The tract at residues 89 to 470 is head of neuraminidase; it reads LCEAQGFAPF…AILPFDIDKM (382 aa). 8 cysteine pairs are disulfide-bonded: Cys90/Cys417, Cys122/Cys127, Cys182/Cys229, Cys231/Cys236, Cys277/Cys290, Cys279/Cys288, Cys316/Cys335, and Cys421/Cys446. Residue Arg116 coordinates substrate. Residue Asn144 is glycosylated (N-linked (GlcNAc...) asparagine; by host). Catalysis depends on Asp149, which acts as the Proton donor/acceptor. Arg150 serves as a coordination point for substrate. 275–276 contributes to the substrate binding site; sequence EE. Arg291 is a substrate binding site. Asp292 contributes to the Ca(2+) binding site. An N-linked (GlcNAc...) asparagine; by host glycan is attached at Asn293. Ca(2+) is bound by residues Gly296 and Asp322. Substrate is bound at residue Arg368. A glycan (N-linked (GlcNAc...) asparagine; by host) is linked at Asn398. The Nucleophile role is filled by Tyr402.

It belongs to the glycosyl hydrolase 34 family. In terms of assembly, homotetramer. It depends on Ca(2+) as a cofactor. N-glycosylated.

It is found in the virion membrane. Its subcellular location is the host apical cell membrane. It catalyses the reaction Hydrolysis of alpha-(2-&gt;3)-, alpha-(2-&gt;6)-, alpha-(2-&gt;8)- glycosidic linkages of terminal sialic acid residues in oligosaccharides, glycoproteins, glycolipids, colominic acid and synthetic substrates.. With respect to regulation, inhibited by the neuraminidase inhibitors zanamivir (Relenza) and oseltamivir (Tamiflu). These drugs interfere with the release of progeny virus from infected cells and are effective against all influenza strains. Resistance to neuraminidase inhibitors is quite rare. Its function is as follows. Catalyzes the removal of terminal sialic acid residues from viral and cellular glycoconjugates. Cleaves off the terminal sialic acids on the glycosylated HA during virus budding to facilitate virus release. Additionally helps virus spread through the circulation by further removing sialic acids from the cell surface. These cleavages prevent self-aggregation and ensure the efficient spread of the progeny virus from cell to cell. Otherwise, infection would be limited to one round of replication. Described as a receptor-destroying enzyme because it cleaves a terminal sialic acid from the cellular receptors. May facilitate viral invasion of the upper airways by cleaving the sialic acid moieties on the mucin of the airway epithelial cells. Likely to plays a role in the budding process through its association with lipid rafts during intracellular transport. May additionally display a raft-association independent effect on budding. Plays a role in the determination of host range restriction on replication and virulence. Sialidase activity in late endosome/lysosome traffic seems to enhance virus replication. The protein is Neuraminidase of Influenza A virus (strain A/Equine/Santiago/1/1985 H3N8).